Consider the following 300-residue polypeptide: 33 kDa chaperonin (300 aa).

Intrachain disulfides connect Cys-235-Cys-237 and Cys-269-Cys-272.

The protein belongs to the HSP33 family. In terms of processing, under oxidizing conditions two disulfide bonds are formed involving the reactive cysteines. Under reducing conditions zinc is bound to the reactive cysteines and the protein is inactive.

The protein localises to the cytoplasm. Functionally, redox regulated molecular chaperone. Protects both thermally unfolding and oxidatively damaged proteins from irreversible aggregation. Plays an important role in the bacterial defense system toward oxidative stress. The protein is 33 kDa chaperonin of Pseudomonas syringae pv. syringae (strain B728a).